The primary structure comprises 47 residues: Antimicrobial peptide LCI (47 aa).

The protein localises to the secreted. Its function is as follows. Has antibacterial activity against X.oryzae pv oryzae and R.solanacearum, but not E.coli or P.carotovorum subsp carotovorum. May bind DNA or mRNA. The chain is Antimicrobial peptide LCI from Bacillus subtilis.